A 320-amino-acid chain; its full sequence is Cytochrome f (320 aa).

The N-terminal stretch at Met-1–Ala-35 is a signal peptide. Heme-binding residues include Phe-36, Cys-56, Cys-59, and His-60. A helical transmembrane segment spans residues Ile-286–Leu-305.

It belongs to the cytochrome f family. As to quaternary structure, the 4 large subunits of the cytochrome b6-f complex are cytochrome b6, subunit IV (17 kDa polypeptide, petD), cytochrome f and the Rieske protein, while the 4 small subunits are PetG, PetL, PetM and PetN. The complex functions as a dimer. Requires heme as cofactor.

It localises to the plastid. It is found in the chloroplast thylakoid membrane. Its function is as follows. Component of the cytochrome b6-f complex, which mediates electron transfer between photosystem II (PSII) and photosystem I (PSI), cyclic electron flow around PSI, and state transitions. This chain is Cytochrome f (petA), found in Marchantia polymorpha (Common liverwort).